The chain runs to 440 residues: Chromosome partition protein MukF (440 aa).

A leucine-zipper region spans residues 208–236; that stretch reads LSETSGTLRELQDTLEAAGDKLQANLLRI.

The protein belongs to the MukF family. Interacts, and probably forms a ternary complex, with MukE and MukB via its C-terminal region. The complex formation is stimulated by calcium or magnesium. It is required for an interaction between MukE and MukB.

Its subcellular location is the cytoplasm. The protein resides in the nucleoid. Involved in chromosome condensation, segregation and cell cycle progression. May participate in facilitating chromosome segregation by condensation DNA from both sides of a centrally located replisome during cell division. Not required for mini-F plasmid partitioning. Probably acts via its interaction with MukB and MukE. Overexpression results in anucleate cells. It has a calcium binding activity. The sequence is that of Chromosome partition protein MukF from Edwardsiella ictaluri (strain 93-146).